Here is a 147-residue protein sequence, read N- to C-terminus: Lysozyme C, tracheal isozyme (147 aa).

An N-terminal signal peptide occupies residues 1–18 (MKALLILGLLLLSVAVQG). One can recognise a C-type lysozyme domain in the interval 19–147 (KTFKRCELAK…LTSYVKGCGV (129 aa)). Intrachain disulfides connect C24-C145, C48-C133, C83-C99, and C95-C113. Active-site residues include E53 and D71.

The protein belongs to the glycosyl hydrolase 22 family. Monomer. As to expression, trachea.

It carries out the reaction Hydrolysis of (1-&gt;4)-beta-linkages between N-acetylmuramic acid and N-acetyl-D-glucosamine residues in a peptidoglycan and between N-acetyl-D-glucosamine residues in chitodextrins.. Its function is as follows. Lysozymes have primarily a bacteriolytic function; those in tissues and body fluids are associated with the monocyte-macrophage system and enhance the activity of immunoagents. In Bos taurus (Bovine), this protein is Lysozyme C, tracheal isozyme.